We begin with the raw amino-acid sequence, 454 residues long: Inner membrane transport protein YajR (454 aa).

Residues 1 to 14 (MNDYKMTPGERRAT) lie on the Periplasmic side of the membrane. A helical membrane pass occupies residues 15-35 (WGLGTVFSLRMLGMFMVLPVL). The Cytoplasmic portion of the chain corresponds to 36–47 (TTYGMALQGASE). A helical membrane pass occupies residues 48–68 (ALIGIAIGIYGLTQAVFQIPF). The Periplasmic segment spans residues 69–84 (GLLSDRIGRKPLIVGG). A helical transmembrane segment spans residues 85-105 (LAVFAAGSVIAALSDSIWGII). The Cytoplasmic segment spans residues 106–137 (LGRALQGSGAIAAAVMALLSDLTREQNRTKAM). The chain crosses the membrane as a helical span at residues 138–158 (AFIGVSFGITFAIAMVLGPII). Over 159 to 165 (THKLGLH) the chain is Periplasmic. Residues 166-186 (ALFWMIAILATTGIALTIWVV) form a helical membrane-spanning segment. At 187–216 (PNSSTHVLNRESGMVKGSFSKVLAEPRLLK) the chain is on the cytoplasmic side. The chain crosses the membrane as a helical span at residues 217–237 (LNFGIMCLHILLMSTFVALPG). At 238-252 (QLADAGFPAAEHWKV) the chain is on the periplasmic side. A helical membrane pass occupies residues 253–273 (YLATMLIAFGSVVPFIIYAEV). Residues 274 to 279 (KRKMKQ) are Cytoplasmic-facing. Residues 280–300 (VFVFCVGLIVVAEIVLWNAQT) traverse the membrane as a helical segment. The Periplasmic segment spans residues 301–306 (QFWQLV). The chain crosses the membrane as a helical span at residues 307-327 (VGVQLFFVAFNLMEALLPSLI). Over 328-340 (SKESPAGYKGTAM) the chain is Cytoplasmic. A helical transmembrane segment spans residues 341–361 (GVYSTSQFLGVAIGGSLGGWI). The Periplasmic portion of the chain corresponds to 362 to 363 (NG). Residues 364–384 (MFDGQGVFLAGAMLAAVWLTV) form a helical membrane-spanning segment. The Cytoplasmic segment spans residues 385–454 (ASTMKEPPYV…FEIEQAIRQA (70 aa)).

It belongs to the major facilitator superfamily.

It localises to the cell inner membrane. The sequence is that of Inner membrane transport protein YajR (yajR) from Escherichia coli (strain K12).